Reading from the N-terminus, the 305-residue chain is GMP synthase [glutamine-hydrolyzing] subunit B (305 aa).

The 183-residue stretch at 2 to 184 (VKPEKFIPKA…LQLPEEICER (183 aa)) folds into the GMPS ATP-PPase domain. 29–35 (SGGVDSS) lines the ATP pocket.

As to quaternary structure, heterodimer composed of a glutamine amidotransferase subunit (A) and a GMP-binding subunit (B).

The catalysed reaction is XMP + L-glutamine + ATP + H2O = GMP + L-glutamate + AMP + diphosphate + 2 H(+). It participates in purine metabolism; GMP biosynthesis; GMP from XMP (L-Gln route): step 1/1. Its function is as follows. Catalyzes the synthesis of GMP from XMP. In Methanosarcina acetivorans (strain ATCC 35395 / DSM 2834 / JCM 12185 / C2A), this protein is GMP synthase [glutamine-hydrolyzing] subunit B (guaAB).